Consider the following 357-residue polypeptide: F-box only protein 25 (357 aa).

The interval 1 to 83 (MPFLGQDWRS…DTAAHSFYRE (83 aa)) is interaction with beta-actin. An F-box domain is found at 224-271 (GLTLSDLPLHMLNNILYRFSDGWDIVTLGQVTPTLYMLSEDRRLWKRL).

Part of a SCF (SKP1-cullin-F-box) protein ligase complex consisting of FBXO25, SKP1, CUL1 and RBX1. Interacts directly with SKP1 and CUL1. Interacts (via C-terminus) with actin (via N-terminus).

The protein resides in the nucleus. The protein operates within protein modification; protein ubiquitination. Functionally, substrate-recognition component of the SCF (SKP1-CUL1-F-box protein)-type E3 ubiquitin ligase complex. May play a role in accumulation of expanded polyglutamine (polyQ) protein huntingtin (HTT). This is F-box only protein 25 (Fbxo25) from Rattus norvegicus (Rat).